A 262-amino-acid chain; its full sequence is Glutamate racemase (262 aa).

Substrate is bound by residues 9–10 (DS) and 41–42 (YG). C73 (proton donor/acceptor) is an active-site residue. Substrate is bound at residue 74-75 (NT). Catalysis depends on C180, which acts as the Proton donor/acceptor. Substrate is bound at residue 181 to 182 (TH).

It belongs to the aspartate/glutamate racemases family.

The catalysed reaction is L-glutamate = D-glutamate. Its pathway is cell wall biogenesis; peptidoglycan biosynthesis. Provides the (R)-glutamate required for cell wall biosynthesis. In Aliivibrio fischeri (strain ATCC 700601 / ES114) (Vibrio fischeri), this protein is Glutamate racemase.